The following is a 234-amino-acid chain: uncharacterized protein (234 aa).

Positions 24 to 83 constitute an HTH tetR-type domain; that stretch reads VERRNELVDGTIEAIRRHGRFLSMDEIAAEIGVSKTVLYRYFVDKNDLTTAVMMRFTQTT. Positions 46–65 form a DNA-binding region, H-T-H motif; it reads SMDEIAAEIGVSKTVLYRYF.

This is an uncharacterized protein from Mycobacterium tuberculosis (strain CDC 1551 / Oshkosh).